We begin with the raw amino-acid sequence, 327 residues long: COP9 signalosome complex subunit 6 (327 aa).

The MPN domain maps to 41 to 174 (VALHPLVILN…VSVFESVIDI (134 aa)). Positions 211-327 (SGENSTVAEH…IGRRMRGLFF (117 aa)) are interaction with Vpr.

This sequence belongs to the peptidase M67A family. CSN6 subfamily. In terms of assembly, component of the CSN complex, composed of COPS1/GPS1, COPS2, COPS3, COPS4, COPS5, COPS6, COPS7 (COPS7A or COPS7B), COPS8 and COPS9 isoform 1. In the complex, it probably interacts directly with COPS2, COPS4, COPS5, COPS7 (COPS7A or COPS7B) and COPS9 isoform 1. Interacts with the translation initiation factor EIF3S6. Interacts weakly with RBX1. Directly interacts with COP1 and 14-3-3 protein sigma/SFN. Interacts with ERCC6. (Microbial infection) Interacts with the HIV-1 protein Vpr. As to expression, widely expressed.

The protein resides in the nucleus. It localises to the cytoplasm. The protein localises to the perinuclear region. Functionally, component of the COP9 signalosome complex (CSN), a complex involved in various cellular and developmental processes. The CSN complex is an essential regulator of the ubiquitin (Ubl) conjugation pathway by mediating the deneddylation of the cullin subunits of SCF-type E3 ligase complexes, leading to decrease the Ubl ligase activity of SCF-type complexes such as SCF, CSA or DDB2. The complex is also involved in phosphorylation of p53/TP53, c-jun/JUN, IkappaBalpha/NFKBIA, ITPK1 and IRF8, possibly via its association with CK2 and PKD kinases. CSN-dependent phosphorylation of TP53 and JUN promotes and protects degradation by the Ubl system, respectively. Has some glucocorticoid receptor-responsive activity. Stabilizes COP1 through reducing COP1 auto-ubiquitination and decelerating COP1 turnover rate, hence regulates the ubiquitination of COP1 targets. In Homo sapiens (Human), this protein is COP9 signalosome complex subunit 6 (COPS6).